The primary structure comprises 125 residues: uncharacterized protein (125 aa).

Its subcellular location is the mitochondrion. This is an uncharacterized protein from Paramecium tetraurelia.